The following is a 528-amino-acid chain: Probable feruloyl esterase B-1 (528 aa).

The N-terminal stretch at 1–19 (MMWWFLLIGLASAAATASS) is a signal peptide. Intrachain disulfides connect Cys29–Cys78, Cys64–Cys117, Cys190–Cys445, Cys259–Cys276, Cys285–Cys295, and Cys505–Cys527. 2 N-linked (GlcNAc...) asparagine glycosylation sites follow: Asn83 and Asn101. Ser191 (acyl-ester intermediate) is an active-site residue. 5 residues coordinate Ca(2+): Asp260, Asp263, Ala265, Asp267, and Ile269. 3 N-linked (GlcNAc...) asparagine glycosylation sites follow: Asn286, Asn354, and Asn385. Active-site charge relay system residues include Asp404 and His444.

It belongs to the tannase family.

It is found in the secreted. The enzyme catalyses feruloyl-polysaccharide + H2O = ferulate + polysaccharide.. Its function is as follows. Involved in degradation of plant cell walls. Hydrolyzes the feruloyl-arabinose ester bond in arabinoxylans as well as the feruloyl-galactose and feruloyl-arabinose ester bonds in pectin. In Aspergillus fumigatus (strain ATCC MYA-4609 / CBS 101355 / FGSC A1100 / Af293) (Neosartorya fumigata), this protein is Probable feruloyl esterase B-1 (faeB-1).